A 165-amino-acid chain; its full sequence is MTIKVERLLVNYKTLEEFRHFREYGAAELSMKDDLKNSIIENDSESPFYGIYYGKKLVARMSLYKIDGNFDRYFDPPQDYLELWKLEVLEPYRGRGYGRALVDFAKSFGLPVKTNARQSTGEFWNKLGFEPITYNEARDRGESPYVWFPQGVQEQTTKPEQARAE.

The 152-residue stretch at 8–159 (LLVNYKTLEE…QGVQEQTTKP (152 aa)) folds into the N-acetyltransferase domain.

This is an uncharacterized protein from Shouchella clausii (strain KSM-K16) (Alkalihalobacillus clausii).